Consider the following 261-residue polypeptide: Hemin import ATP-binding protein HmuV (261 aa).

An ABC transporter domain is found at 3 to 239 (LDAADITVKL…AILSQAYGCA (237 aa)). Residue 35-42 (GPNGSGKT) coordinates ATP.

It belongs to the ABC transporter superfamily. Heme (hemin) importer (TC 3.A.1.14.5) family. The complex is composed of two ATP-binding proteins (HmuV), two transmembrane proteins (HmuU) and a solute-binding protein (HmuT).

The protein resides in the cell inner membrane. In terms of biological role, part of the ABC transporter complex HmuTUV involved in hemin import. Responsible for energy coupling to the transport system. This chain is Hemin import ATP-binding protein HmuV, found in Roseobacter denitrificans (strain ATCC 33942 / OCh 114) (Erythrobacter sp. (strain OCh 114)).